We begin with the raw amino-acid sequence, 775 residues long: Beta-galactosidase 7 (775 aa).

The N-terminal stretch at 1-17 (MRGGMAITAALVVVAAA) is a signal peptide. Catalysis depends on glutamate 185, which acts as the Proton donor. The active-site Nucleophile is the glutamate 256. Asparagine 257, asparagine 266, asparagine 277, asparagine 358, and asparagine 602 each carry an N-linked (GlcNAc...) asparagine glycan. Positions 689–775 (RGKVPKVRIW…KSLLVVADCR (87 aa)) constitute an SUEL-type lectin domain.

The protein belongs to the glycosyl hydrolase 35 family.

It localises to the secreted. It is found in the extracellular space. The protein localises to the apoplast. It catalyses the reaction Hydrolysis of terminal non-reducing beta-D-galactose residues in beta-D-galactosides.. The polypeptide is Beta-galactosidase 7 (Oryza sativa subsp. japonica (Rice)).